A 256-amino-acid chain; its full sequence is MQIYSEYYEKIGPRKLRLLVKRRLLFASTWLYINNYILLSIIMKLQTKHMILLGFVAVVVVFIIFMLTRKKKEGFSIGNIFGKVKGAVTGTVGKVVNVVKPQGYKPEFVNRVNFGKFWACPEGTTDWGSEDKQCLVSQYGPMMWRNKGGNEWGWSCPAGSAPNNSDDWNQKCVQGYSMKKLIDGQWRCTDTEIDTGKDWSNSDWFTAQQQCDRGNNKVFTRRMYIDGKWQCPDGTWDTGFTWSDGENGGKQCKYYP.

2 hydrophobic regions span residues leucine 24–lysine 44 and threonine 47–leucine 67. 3 disulfide bridges follow: cysteine 120-cysteine 134, cysteine 156-cysteine 172, and cysteine 188-cysteine 211.

Interacts with the major capsid protein. Post-translationally, stabilized by 3 intramolecular disulfide bonds.

It localises to the virion. One of the minor capsid proteins that constitute a network internal to the major capsid proteins and outside the lipid membrane. The minor capsid proteins glue and stabilize the capsomers. This chain is Minor capsid protein P7, found in Paramecium bursaria Chlorella virus 1 (PBCV-1).